The chain runs to 1004 residues: MSCYRKRHFLLWLLRAVCMLHLTARGAYATVGLQGVPTWIYLGLKSPFIEFGNQVEQLANSSIPLNMTKDEQANMHQEGLRKLGTFIKPVDLRDSETGFVKADLTKRLVFDRPNNITSRPIHPIQEEMDQKQIILLDEDTDENGLPASLTDEDRKFIVPMALKNISPDPRWAATTPSPSALQPNAKAISTIVPSPLAQVEGDPTSNIDDLKKHILFLHNMTKTNSNFESKFVKFPSLQKDKAKTSGAGGSPPNPKRPQRPIHQYSAPIAPPTPKVPAPDGGGVGGAAYNPGEQPIGGYYQNEELANNQSLLKPTDTDSHPAAGGSSHGQKNPSEPQVILLNETLSTETSIEADRSPSINQPKAGSPARTTKRPPCLRNPESPKCIRQRRREEQQRQRERDEWFRGQSQYMQPRFEPIIQTINNTKRFAVSIEIPDSFKVSSEGSDGELLSRVERSQPSISSSSSSSSSSSRKIMPDYIKVSMENNTSVTDYFKHDVVMTSADVASDREFLIKNMEEHGGAGSANSHHNDTTPTADAYSETIDLNPNNCYSAIGLSNSQKKQCVKHTSVMPAISRGARAAIQECQFQFKNRRWNCSTTNDETVFGPMTSLAAPEMAFIHALAAATVTSFIARACRDGQLASCSCSRGSRPKQLHDDWKWGGCGDNLEFAYKFATDFIDSREKETNRETRGVKRKREEINKNRMHSDDTNAFNIGIKRNKNVDAKNDTSLVVRNVRKSTEAENSHILNENFDQHLLELEQRITKEILTSKIDEEEMIKLQEKIKQEIVNTKFFKGEQQPRKKKRKNQRAAADAPAYPRNGIKESYKDGGILPRSTATVKARSLMNLHNNEAGRRAVIKKARITCKCHGVSGSCSLITCWQQLSSIREIGDYLREKYEGATKVKINKRGRLQIKDLQFKVPTAHDLIYLDESPDWCRNSYALHWPGTHGRVCHKNSSGLESCAILCCGRGYNTKNIIVNERCNCKFHWCCQVKCEVCTKVLEEHTCK.

A signal peptide spans 1-29; that stretch reads MSCYRKRHFLLWLLRAVCMLHLTARGAYA. N-linked (GlcNAc...) asparagine glycans are attached at residues Asn-60, Asn-66, Asn-115, and Asn-219. Residues 238 to 298 are disordered; the sequence is QKDKAKTSGA…NPGEQPIGGY (61 aa). N-linked (GlcNAc...) asparagine glycosylation is found at Asn-307 and Asn-341. The interval 310 to 407 is disordered; sequence LLKPTDTDSH…ERDEWFRGQS (98 aa). The segment covering 389–403 has biased composition (basic and acidic residues); that stretch reads RREEQQRQRERDEWF. An N-linked (GlcNAc...) asparagine glycan is attached at Asn-422. Positions 438-472 are disordered; that stretch reads KVSSEGSDGELLSRVERSQPSISSSSSSSSSSSRK. Over residues 458-470 the composition is skewed to low complexity; it reads SISSSSSSSSSSS. N-linked (GlcNAc...) asparagine glycans are attached at residues Asn-484, Asn-485, Asn-528, and Asn-593. 3 disulfide bridges follow: Cys-583–Cys-594, Cys-633–Cys-641, and Cys-643–Cys-661. N-linked (GlcNAc...) asparagine glycosylation is present at Asn-724. The segment at 790 to 822 is disordered; sequence FFKGEQQPRKKKRKNQRAAADAPAYPRNGIKES. Cystine bridges form between Cys-862/Cys-876, Cys-864/Cys-871, Cys-933/Cys-964, Cys-949/Cys-959, Cys-963/Cys-1003, Cys-979/Cys-994, Cys-981/Cys-991, and Cys-986/Cys-987. Ser-868 carries O-palmitoleoyl serine; by PORCN lipidation. Residue Asn-952 is glycosylated (N-linked (GlcNAc...) asparagine).

This sequence belongs to the Wnt family. Interacts with porcupine (por). Glycosylated, glycosylation is stimulated by porcupine at the ER. In terms of processing, palmitoleoylated by porcupine. The lipid group functions as a sorting signal, targeting the ligand to polarized vesicles that transport Wnt5 to unique sites at the cell surface. Depalmitoleoylated by notum, leading to inhibit Wnt signaling pathway. Dynamic expression pattern during embryogenesis. Expression is seen in the limb primordia of the head and thoracic segments, mesodermal and neurogenic regions.

It is found in the secreted. The protein localises to the extracellular space. It localises to the extracellular matrix. Binds as a ligand to a family of frizzled seven-transmembrane receptors and acts through a cascade of genes on the nucleus. Probable developmental protein. May be a signaling molecule which affects the development of discrete regions of tissues. Is likely to signal over only few cell diameters. May have a role in limb and CNS development; may be a downstream target of Dll that acts in the specification of these primordia. The polypeptide is Protein Wnt-5 (Wnt5) (Drosophila melanogaster (Fruit fly)).